The following is a 67-amino-acid chain: Conotoxin Cl14.2b (67 aa).

The signal sequence occupies residues Met1 to Gly20. Residues Phe21–Gln48 constitute a propeptide that is removed on maturation.

This sequence belongs to the conotoxin L superfamily. In terms of processing, contains 2 disulfide bonds. Expressed by the venom duct.

It is found in the secreted. Increases calcium current amplitude through Cav1.2/Cav1.3 channels in rat pancreatic beta-cells, which is a prerequisite for eliciting insulin secretion. Stimulates insulin secretion in NIT-1 insulinoma cell lines. In vivo, significantly decreases mice blood glucose levels as of 45 minutes after treatment, similarly to insulin treatment. Has a potential therapeutic use in endocrinal pathologies such as early stages of type 2 diabetes where the pancreas's capability to produce insulin is still effective. This chain is Conotoxin Cl14.2b, found in Californiconus californicus (California cone).